Reading from the N-terminus, the 603-residue chain is DNA mismatch repair protein MutL (603 aa).

Residues Lys-361–Pro-383 are disordered.

It belongs to the DNA mismatch repair MutL/HexB family.

Its function is as follows. This protein is involved in the repair of mismatches in DNA. It is required for dam-dependent methyl-directed DNA mismatch repair. May act as a 'molecular matchmaker', a protein that promotes the formation of a stable complex between two or more DNA-binding proteins in an ATP-dependent manner without itself being part of a final effector complex. The polypeptide is DNA mismatch repair protein MutL (Listeria monocytogenes serotype 4b (strain CLIP80459)).